Reading from the N-terminus, the 483-residue chain is Glutamate--tRNA ligase (483 aa).

The 'HIGH' region signature appears at 11 to 21 (PSPTGHLHIGN). Residues 252–256 (KLSKR) carry the 'KMSKS' region motif. Lys255 contributes to the ATP binding site.

The protein belongs to the class-I aminoacyl-tRNA synthetase family. Glutamate--tRNA ligase type 1 subfamily. Monomer.

The protein localises to the cytoplasm. The enzyme catalyses tRNA(Glu) + L-glutamate + ATP = L-glutamyl-tRNA(Glu) + AMP + diphosphate. Catalyzes the attachment of glutamate to tRNA(Glu) in a two-step reaction: glutamate is first activated by ATP to form Glu-AMP and then transferred to the acceptor end of tRNA(Glu). This is Glutamate--tRNA ligase from Bacillus velezensis (strain DSM 23117 / BGSC 10A6 / LMG 26770 / FZB42) (Bacillus amyloliquefaciens subsp. plantarum).